The sequence spans 619 residues: Tyrosine-protein kinase ZAP-70 (619 aa).

Residues 10–102 (FFYGSISRAE…GLPCNLRKPC (93 aa)) form the SH2 1 domain. The segment at 103–162 (NRPSGLEPQPGVFDCLRDAMVRDYVRQTWKLEGEALEQAIISQAPQVEKLIATTAHERMP) is interdomain A. Residues 163–254 (WYHSSLTREE…GLIYCLKEAC (92 aa)) form the SH2 2 domain. Tyr248 bears the Phosphotyrosine mark. An interdomain B region spans residues 255 to 337 (PNSSASNASG…KKLFLKRDNL (83 aa)). The disordered stretch occupies residues 260-309 (SNASGAAAPTLPAHPSTLTHPQRRIDTLNSDGYTPEPARITSPDKPRPMP). Ser289 bears the Phosphoserine mark. Tyr292 is subject to Phosphotyrosine. Tyr315 is subject to Phosphotyrosine; by LCK. Tyr319 is subject to Phosphotyrosine. A Protein kinase domain is found at 338–600 (LIADIELGCG…QRMRACYYSL (263 aa)). ATP contacts are provided by residues 345 to 352 (GCGNFGSV) and Lys369. Asp461 acts as the Proton acceptor in catalysis. Phosphotyrosine occurs at positions 492 and 493. A Glycyl lysine isopeptide (Lys-Gly) (interchain with G-Cter in ubiquitin) cross-link involves residue Lys544. Lys603 carries the post-translational modification N6-acetyllysine.

The protein belongs to the protein kinase superfamily. Tyr protein kinase family. SYK/ZAP-70 subfamily. In terms of assembly, interacts with CD247/CD3Z; this interaction docks ZAP70 at the stimulated TCR. Interacts with NFAM1. Interacts with adapter protein SLA; this interaction negatively regulates T-cell receptor signaling. Interacts with FCRL3. Interacts with VAV1. Interacts with CBL; this interaction promotes ubiquitination, internalization and subsequent degradation of CD247/CD3Z. Identified in a complex with CBL and UBE2L3. Interacts with SHB. Interacts with adapter protein SLA2; this interaction negatively regulates T-cell receptor signaling. Interacts with CBLB. Interacts (via SH2 domains) with RHOH; this interaction regulates ZAP70 subcellular localization. Interacts with DEF6. Interacts (ubiquitinated form) with OTUD7B and UBASH3B. Phosphorylated on tyrosine residues upon T-cell antigen receptor (TCR) stimulation. Phosphorylation of Tyr-315 and Tyr-319 are essential for ZAP70 positive function on T-lymphocyte activation whereas Tyr-292 has a negative regulatory role. Within the C-terminal kinase domain, Tyr-492 and Tyr-493 are phosphorylated after TCR induction, Tyr-492 playing a negative regulatory role and Tyr-493 a positive. Tyr-493 is dephosphorylated by PTN22. Post-translationally, ubiquitinated in response to T cell activation. Deubiquitinated by OTUD7B. In terms of tissue distribution, expressed in T- and natural killer cells. Also present in early thymocytes and pro/pre B-cells.

It is found in the cytoplasm. The protein resides in the cell membrane. It catalyses the reaction L-tyrosyl-[protein] + ATP = O-phospho-L-tyrosyl-[protein] + ADP + H(+). Its activity is regulated as follows. Activated by phosphorylation at Tyr-493 in the activation loop. Inhibited by staurosporine. Tyrosine kinase that plays an essential role in regulation of the adaptive immune response. Regulates motility, adhesion and cytokine expression of mature T-cells, as well as thymocyte development. Also contributes to the development and activation of primary B-lymphocytes. When antigen presenting cells (APC) activate T-cell receptor (TCR), a serie of phosphorylations lead to the recruitment of ZAP70 to the doubly phosphorylated TCR component CD247/CD3Z through ITAM motif at the plasma membrane. This recruitment serves to localization to the stimulated TCR and to relieve its autoinhibited conformation. Release of ZAP70 active conformation is further stabilized by phosphorylation mediated by LCK. Subsequently, ZAP70 phosphorylates at least 2 essential adapter proteins: LAT and LCP2. In turn, a large number of signaling molecules are recruited and ultimately lead to lymphokine production, T-cell proliferation and differentiation. Furthermore, ZAP70 controls cytoskeleton modifications, adhesion and mobility of T-lymphocytes, thus ensuring correct delivery of effectors to the APC. ZAP70 is also required for TCR-CD247/CD3Z internalization and degradation through interaction with the E3 ubiquitin-protein ligase CBL and adapter proteins SLA and SLA2. Thus, ZAP70 regulates both T-cell activation switch on and switch off by modulating TCR expression at the T-cell surface. During thymocyte development, ZAP70 promotes survival and cell-cycle progression of developing thymocytes before positive selection (when cells are still CD4/CD8 double negative). Additionally, ZAP70-dependent signaling pathway may also contribute to primary B-cells formation and activation through B-cell receptor (BCR). The polypeptide is Tyrosine-protein kinase ZAP-70 (ZAP70) (Homo sapiens (Human)).